We begin with the raw amino-acid sequence, 240 residues long: Large ribosomal subunit protein bL25 (240 aa).

Disordered regions lie at residues 1–21 (MAEN…PARR) and 204–240 (GAAP…KAKK). Positions 204–229 (GAAPAAGAAAPAGGAAPAAGAAPAKG) are enriched in low complexity. Residues 230–240 (GEAKGGDKAKK) are compositionally biased toward basic and acidic residues.

The protein belongs to the bacterial ribosomal protein bL25 family. CTC subfamily. Part of the 50S ribosomal subunit; part of the 5S rRNA/L5/L18/L25 subcomplex. Contacts the 5S rRNA. Binds to the 5S rRNA independently of L5 and L18.

Its function is as follows. This is one of the proteins that binds to the 5S RNA in the ribosome where it forms part of the central protuberance. The protein is Large ribosomal subunit protein bL25 of Anaeromyxobacter dehalogenans (strain 2CP-1 / ATCC BAA-258).